The chain runs to 59 residues: Large ribosomal subunit protein uL30 (59 aa).

The protein belongs to the universal ribosomal protein uL30 family. As to quaternary structure, part of the 50S ribosomal subunit.

This chain is Large ribosomal subunit protein uL30, found in Staphylococcus epidermidis (strain ATCC 12228 / FDA PCI 1200).